The sequence spans 498 residues: ATP synthase subunit beta, chloroplastic (498 aa).

Residue 172-179 (GGAGVGKT) participates in ATP binding.

Belongs to the ATPase alpha/beta chains family. In terms of assembly, F-type ATPases have 2 components, CF(1) - the catalytic core - and CF(0) - the membrane proton channel. CF(1) has five subunits: alpha(3), beta(3), gamma(1), delta(1), epsilon(1). CF(0) has four main subunits: a(1), b(1), b'(1) and c(9-12).

The protein resides in the plastid. Its subcellular location is the chloroplast thylakoid membrane. The catalysed reaction is ATP + H2O + 4 H(+)(in) = ADP + phosphate + 5 H(+)(out). Its function is as follows. Produces ATP from ADP in the presence of a proton gradient across the membrane. The catalytic sites are hosted primarily by the beta subunits. The polypeptide is ATP synthase subunit beta, chloroplastic (Chamaerops humilis (Mediterranean fan palm)).